The primary structure comprises 250 residues: Large ribosomal subunit protein uL29m (250 aa).

An N6-acetyllysine modification is found at Lys144.

It belongs to the universal ribosomal protein uL29 family. In terms of assembly, component of the mitochondrial large ribosomal subunit (mt-LSU). Mature mammalian 55S mitochondrial ribosomes consist of a small (28S) and a large (39S) subunit. The 28S small subunit contains a 12S ribosomal RNA (12S mt-rRNA) and 30 different proteins. The 39S large subunit contains a 16S rRNA (16S mt-rRNA), a copy of mitochondrial valine transfer RNA (mt-tRNA(Val)), which plays an integral structural role, and 52 different proteins.

It is found in the mitochondrion. In Homo sapiens (Human), this protein is Large ribosomal subunit protein uL29m (MRPL47).